We begin with the raw amino-acid sequence, 168 residues long: Ribosome maturation factor RimM (168 aa).

The PRC barrel domain occupies 96–168 (VDEYYWGDLI…TIRVDWQKDW (73 aa)).

This sequence belongs to the RimM family. As to quaternary structure, binds ribosomal protein uS19.

It localises to the cytoplasm. Functionally, an accessory protein needed during the final step in the assembly of 30S ribosomal subunit, possibly for assembly of the head region. Essential for efficient processing of 16S rRNA. May be needed both before and after RbfA during the maturation of 16S rRNA. It has affinity for free ribosomal 30S subunits but not for 70S ribosomes. In Aromatoleum aromaticum (strain DSM 19018 / LMG 30748 / EbN1) (Azoarcus sp. (strain EbN1)), this protein is Ribosome maturation factor RimM.